The primary structure comprises 20 residues: Astacin-like peptidase p18 (20 aa).

In terms of domain architecture, Peptidase M12A spans 1-20; sequence NAIPGNYYRWPYAKVPYVID.

Requires Zn(2+) as cofactor.

Active against casein. Has a role as a digestive enzyme. In Argiope aurantia (Black-and-yellow garden spider), this protein is Astacin-like peptidase p18.